We begin with the raw amino-acid sequence, 306 residues long: UDP-3-O-acyl-N-acetylglucosamine deacetylase (306 aa).

Residues His-79, His-238, and Asp-242 each coordinate Zn(2+). His-265 serves as the catalytic Proton donor.

This sequence belongs to the LpxC family. Zn(2+) serves as cofactor.

The catalysed reaction is a UDP-3-O-[(3R)-3-hydroxyacyl]-N-acetyl-alpha-D-glucosamine + H2O = a UDP-3-O-[(3R)-3-hydroxyacyl]-alpha-D-glucosamine + acetate. It functions in the pathway glycolipid biosynthesis; lipid IV(A) biosynthesis; lipid IV(A) from (3R)-3-hydroxytetradecanoyl-[acyl-carrier-protein] and UDP-N-acetyl-alpha-D-glucosamine: step 2/6. Catalyzes the hydrolysis of UDP-3-O-myristoyl-N-acetylglucosamine to form UDP-3-O-myristoylglucosamine and acetate, the committed step in lipid A biosynthesis. The polypeptide is UDP-3-O-acyl-N-acetylglucosamine deacetylase (Shewanella piezotolerans (strain WP3 / JCM 13877)).